The sequence spans 273 residues: Large ribosomal subunit protein uL2 (273 aa).

2 disordered regions span residues 31–50 and 221–273; these read APLL…GRIT and RGTA…RRGK. The segment covering 253-273 has biased composition (basic residues); the sequence is KGKKTRHNKRTDKYIVRRRGK.

The protein belongs to the universal ribosomal protein uL2 family. In terms of assembly, part of the 50S ribosomal subunit. Forms a bridge to the 30S subunit in the 70S ribosome.

Its function is as follows. One of the primary rRNA binding proteins. Required for association of the 30S and 50S subunits to form the 70S ribosome, for tRNA binding and peptide bond formation. It has been suggested to have peptidyltransferase activity; this is somewhat controversial. Makes several contacts with the 16S rRNA in the 70S ribosome. The chain is Large ribosomal subunit protein uL2 from Actinobacillus pleuropneumoniae serotype 7 (strain AP76).